Here is a 72-residue protein sequence, read N- to C-terminus: NAD(P)H-quinone oxidoreductase subunit O (72 aa).

It belongs to the complex I NdhO subunit family. NDH-1 can be composed of about 15 different subunits; different subcomplexes with different compositions have been identified which probably have different functions.

The protein resides in the cellular thylakoid membrane. The catalysed reaction is a plastoquinone + NADH + (n+1) H(+)(in) = a plastoquinol + NAD(+) + n H(+)(out). It catalyses the reaction a plastoquinone + NADPH + (n+1) H(+)(in) = a plastoquinol + NADP(+) + n H(+)(out). Its function is as follows. NDH-1 shuttles electrons from an unknown electron donor, via FMN and iron-sulfur (Fe-S) centers, to quinones in the respiratory and/or the photosynthetic chain. The immediate electron acceptor for the enzyme in this species is believed to be plastoquinone. Couples the redox reaction to proton translocation, and thus conserves the redox energy in a proton gradient. Cyanobacterial NDH-1 also plays a role in inorganic carbon-concentration. In Trichodesmium erythraeum (strain IMS101), this protein is NAD(P)H-quinone oxidoreductase subunit O.